Here is a 405-residue protein sequence, read N- to C-terminus: Diaminopimelate decarboxylase (405 aa).

Lys46 is modified (N6-(pyridoxal phosphate)lysine). Pyridoxal 5'-phosphate contacts are provided by residues Gly225 and 259–262 (EPGR). Residues Arg262, Arg298, and Tyr302 each contribute to the substrate site. Residue Cys329 is the Proton donor of the active site. 2 residues coordinate substrate: Glu330 and Tyr358. Tyr358 is a pyridoxal 5'-phosphate binding site.

Belongs to the Orn/Lys/Arg decarboxylase class-II family. LysA subfamily. As to quaternary structure, homodimer. The cofactor is pyridoxal 5'-phosphate.

The enzyme catalyses meso-2,6-diaminopimelate + H(+) = L-lysine + CO2. Its pathway is amino-acid biosynthesis; L-lysine biosynthesis via DAP pathway; L-lysine from DL-2,6-diaminopimelate: step 1/1. Its function is as follows. Specifically catalyzes the decarboxylation of meso-diaminopimelate (meso-DAP) to L-lysine. The protein is Diaminopimelate decarboxylase of Helicobacter pylori (Campylobacter pylori).